The chain runs to 227 residues: 4-nitrobenzoate reductase (227 aa).

15 to 19 (RRAVR) provides a ligand contact to FMN. Ser-45, Tyr-102, and Ile-107 together coordinate NAD(+). Arg-213 is a binding site for FMN.

This sequence belongs to the nitroreductase family. Requires FMN as cofactor.

It carries out the reaction 4-nitrobenzoate + 2 NADH + 2 H(+) = 4-hydroxylaminobenzoate + 2 NAD(+) + H2O. In terms of biological role, nitroreductase involved in the degradation of nitroaromatic compounds. Catalyzes the conversion of 4-nitrobenzoate to 4-hydroxylaminobenzoate. Required for the catabolism of 4-nitrotoluene. The protein is 4-nitrobenzoate reductase of Pseudomonas putida (Arthrobacter siderocapsulatus).